We begin with the raw amino-acid sequence, 198 residues long: ATP-dependent Clp protease proteolytic subunit (198 aa).

Ser98 serves as the catalytic Nucleophile. His123 is a catalytic residue.

It belongs to the peptidase S14 family. In terms of assembly, fourteen ClpP subunits assemble into 2 heptameric rings which stack back to back to give a disk-like structure with a central cavity, resembling the structure of eukaryotic proteasomes.

The protein localises to the cytoplasm. It carries out the reaction Hydrolysis of proteins to small peptides in the presence of ATP and magnesium. alpha-casein is the usual test substrate. In the absence of ATP, only oligopeptides shorter than five residues are hydrolyzed (such as succinyl-Leu-Tyr-|-NHMec, and Leu-Tyr-Leu-|-Tyr-Trp, in which cleavage of the -Tyr-|-Leu- and -Tyr-|-Trp bonds also occurs).. Its function is as follows. Cleaves peptides in various proteins in a process that requires ATP hydrolysis. Has a chymotrypsin-like activity. Plays a major role in the degradation of misfolded proteins. The protein is ATP-dependent Clp protease proteolytic subunit of Ehrlichia ruminantium (strain Welgevonden).